We begin with the raw amino-acid sequence, 178 residues long: Ribosomal RNA small subunit methyltransferase G (178 aa).

Residues glycine 54, leucine 59, 105-106 (LE), and arginine 120 contribute to the S-adenosyl-L-methionine site.

This sequence belongs to the methyltransferase superfamily. RNA methyltransferase RsmG family.

It is found in the cytoplasm. The enzyme catalyses guanosine(527) in 16S rRNA + S-adenosyl-L-methionine = N(7)-methylguanosine(527) in 16S rRNA + S-adenosyl-L-homocysteine. In terms of biological role, specifically methylates the N7 position of guanine in position 527 of 16S rRNA. This is Ribosomal RNA small subunit methyltransferase G from Helicobacter pylori (strain ATCC 700392 / 26695) (Campylobacter pylori).